Reading from the N-terminus, the 631-residue chain is Phosphomethylpyrimidine synthase (631 aa).

Residues Asn-239, Met-268, Tyr-297, His-333, 353–355 (SRG), 394–397 (DGLR), and Glu-433 contribute to the substrate site. His-437 is a Zn(2+) binding site. A substrate-binding site is contributed by Tyr-460. Zn(2+) is bound at residue His-501. [4Fe-4S] cluster is bound by residues Cys-581, Cys-584, and Cys-589.

This sequence belongs to the ThiC family. In terms of assembly, homodimer. Requires [4Fe-4S] cluster as cofactor.

It carries out the reaction 5-amino-1-(5-phospho-beta-D-ribosyl)imidazole + S-adenosyl-L-methionine = 4-amino-2-methyl-5-(phosphooxymethyl)pyrimidine + CO + 5'-deoxyadenosine + formate + L-methionine + 3 H(+). The protein operates within cofactor biosynthesis; thiamine diphosphate biosynthesis. Functionally, catalyzes the synthesis of the hydroxymethylpyrimidine phosphate (HMP-P) moiety of thiamine from aminoimidazole ribotide (AIR) in a radical S-adenosyl-L-methionine (SAM)-dependent reaction. This Escherichia coli O6:H1 (strain CFT073 / ATCC 700928 / UPEC) protein is Phosphomethylpyrimidine synthase.